Consider the following 109-residue polypeptide: Cell cycle protein GpsB (109 aa).

A coiled-coil region spans residues 36-63; the sequence is IKDYETYAALVKSLRQEIADLKEELTRK.

Belongs to the GpsB family. Forms polymers through the coiled coil domains. Interacts with PBP1, MreC and EzrA.

The protein localises to the cytoplasm. Its function is as follows. Divisome component that associates with the complex late in its assembly, after the Z-ring is formed, and is dependent on DivIC and PBP2B for its recruitment to the divisome. Together with EzrA, is a key component of the system that regulates PBP1 localization during cell cycle progression. Its main role could be the removal of PBP1 from the cell pole after pole maturation is completed. Also contributes to the recruitment of PBP1 to the division complex. Not essential for septum formation. This Streptococcus pneumoniae serotype 4 (strain ATCC BAA-334 / TIGR4) protein is Cell cycle protein GpsB.